A 241-amino-acid chain; its full sequence is MLSSKYISVSFLLLSLSLHAVNCADPLYHFCFSQESYTATSRYGTNLNGLLNLLSTKVPSKGFGLSSTGQGQDRANGLALCRGDVSKTNCTTCVIDAGKELGNRCPYKKGAIIWYDNCLLKYSNIDFFGEIDNKNKFYMWNVQDVENPTSFNPKVKDLLSRLSNKAYANPKFYATGDLKLDSSSKLYGLAQCTRDLSGLDCKKCLDTAISELPNCCDGKRGGRVVGGSCNVRYELYPFVDA.

Residues 1 to 23 (MLSSKYISVSFLLLSLSLHAVNC) form the signal peptide. Gnk2-homologous domains follow at residues 25 to 127 (DPLY…NIDF) and 133 to 238 (NKNK…LYPF). Disulfide bonds link Cys-81–Cys-90, Cys-93–Cys-118, Cys-192–Cys-201, and Cys-204–Cys-229. Asn-89 is a glycosylation site (N-linked (GlcNAc...) asparagine).

This sequence belongs to the cysteine-rich repeat secretory protein family.

Its subcellular location is the secreted. Its function is as follows. Possesses antimicrobial activity toward the oomycete Phytophthora cinnamomi (ink disease agent), thus reducing its growth rate and confering an increased resistance to the plant. This is Antimicrobial ginkbilobin-2-like protein from Castanea crenata (Japanese chestnut).